A 447-amino-acid chain; its full sequence is Secretin receptor (447 aa).

The first 28 residues, 1-28 (MLSTMSPRLSLLLLWLLLLINAAHPVGA), serve as a signal peptide directing secretion. Over 29–140 (LPRLCDVRRV…NERRHAYLLK (112 aa)) the chain is Extracellular. Cystine bridges form between Cys46–Cys74, Cys65–Cys106, and Cys88–Cys122. N-linked (GlcNAc...) asparagine glycosylation is found at Asn71, Asn99, Asn105, and Asn127. A helical membrane pass occupies residues 141–166 (LKVMYTVGYSSSLAMLLVALSILCSF). The Cytoplasmic portion of the chain corresponds to 167–173 (RRLHCTR). Residues 174–194 (NYIHMHLFVSFILRALSNFIK) traverse the membrane as a helical segment. The Extracellular segment spans residues 195 to 215 (DAVLFPADDVTYCDAHRAGCK). Cys214 and Cys284 form a disulfide bridge. A helical transmembrane segment spans residues 216–238 (LVMIFFQYCIMANYAWLLVEGLY). At 239 to 253 (LHTLLAISFFSERKC) the chain is on the cytoplasmic side. The chain crosses the membrane as a helical span at residues 254–275 (LQAFVLFGWGSPAIFVALWAVT). Topologically, residues 276–290 (RHFLEDFGCWDINSN) are extracellular. A glycan (N-linked (GlcNAc...) asparagine) is linked at Asn290. Residues 291–314 (ASIWWVIRGPVILSIVINFIFFIN) traverse the membrane as a helical segment. The Cytoplasmic portion of the chain corresponds to 315-339 (ILRILMRKLRTQETRGNETHHYKRL). The helical transmembrane segment at 340–355 (AKSTLLLIPLFGIHYI) threads the bilayer. Topologically, residues 356–366 (VFAFSPEGAME) are extracellular. The helical transmembrane segment at 367–390 (VQLFFELALGSFQGLVVAVLYCFL) threads the bilayer. Residues 391 to 447 (NGELEVQKKWRQWHLQEFPLRPVALSNSFSNATNGPTHSTKAGTSEQSRSIPGANVI) lie on the Cytoplasmic side of the membrane. Residues 423–440 (TNGPTHSTKAGTSEQSRS) show a composition bias toward polar residues. A disordered region spans residues 423-447 (TNGPTHSTKAGTSEQSRSIPGANVI).

Belongs to the G-protein coupled receptor 2 family. Phosphorylated on Ser and Thr residues at the cytoplasmic C-terminus by G protein-coupled receptor kinases (GRKs). In terms of tissue distribution, in brain, expressed in the hippocampal CA1 region, the lower layer of cerebral cortex, the anterior olfactory nuclei, the anterior ventrolateral thalamus, the lateral region of hypothalamus, substantia nigra, tegmental area and central nucleus of the inferior colliculus, the ventral supramamillary nucleus and the cerebellum. Expressed in brown adipocytes: expression predominates in mature brown adipocytes (at protein level). Detected in the renal medulla, where it localized predominantly on the basolateral membranes of cells in the collecting ducts (blue arrow) and the ascending thick segments of the loop of Henle.

The protein localises to the cell membrane. It localises to the basolateral cell membrane. In terms of biological role, g protein-coupled receptor activated by secretin (SCT), which is involved in different processes such as regulation of the pH of the duodenal content, food intake and water homeostasis. Ligand binding causes a conformation change that triggers signaling via guanine nucleotide-binding proteins (G proteins) and activates cAMP-dependent pathway. Upon binding to secretin, regulates the pH of the duodenum by (1) inhibiting the secretion of gastric acid from the parietal cells of the stomach and (2) stimulating the production of bicarbonate (NaHCO(3)) from the ductal cells of the pancreas. In addition to regulating the pH of the duodenal content, plays a central role in diet induced thermogenesis: acts as a non-sympathetic brown fat (BAT) activator mediating prandial thermogenesis, which consequentially induces satiation. Mechanistically, secretin released by the gut after a meal binds to secretin receptor (SCTR) in brown adipocytes, activating brown fat thermogenesis by stimulating lipolysis, which is sensed in the brain and promotes satiation. Also able to stimulate lipolysis in white adipocytes. Also plays an important role in cellular osmoregulation by regulating renal water reabsorption. Also plays a role in the central nervous system: required for synaptic plasticity. This Mus musculus (Mouse) protein is Secretin receptor.